The primary structure comprises 107 residues: Putative double-stranded DNA mimic protein PC1_1990 (107 aa).

This sequence belongs to the putative dsDNA mimic protein family.

Functionally, may act as a double-stranded DNA (dsDNA) mimic. Probably regulates the activity of a dsDNA-binding protein. The polypeptide is Putative double-stranded DNA mimic protein PC1_1990 (Pectobacterium carotovorum subsp. carotovorum (strain PC1)).